A 652-amino-acid polypeptide reads, in one-letter code: Bifunctional protein ThiO/ThiG (652 aa).

Positions Met1–Ser366 are thiO. Residues Ile5–Val19 and Ala44–Met46 contribute to the FAD site. A glycine-binding site is contributed by Glu52. Val173 lines the FAD pocket. Glycine contacts are provided by Arg301 and Arg327. His325–Leu331 is an FAD binding site. The thiG stretch occupies residues Ser393 to Ser652. Lys494 serves as the catalytic Schiff-base intermediate with DXP. Residues Gly555, Ala581 to Gly582, and Asn603 to Ser604 each bind 1-deoxy-D-xylulose 5-phosphate.

This sequence in the N-terminal section; belongs to the DAO family. ThiO subfamily. In the C-terminal section; belongs to the ThiG family. As to quaternary structure, interacts with ThiH and ThiS. Requires FAD as cofactor.

Its subcellular location is the cytoplasm. It catalyses the reaction glycine + O2 + H2O = glyoxylate + H2O2 + NH4(+). It carries out the reaction [ThiS sulfur-carrier protein]-C-terminal-Gly-aminoethanethioate + 2-iminoacetate + 1-deoxy-D-xylulose 5-phosphate = [ThiS sulfur-carrier protein]-C-terminal Gly-Gly + 2-[(2R,5Z)-2-carboxy-4-methylthiazol-5(2H)-ylidene]ethyl phosphate + 2 H2O + H(+). The protein operates within cofactor biosynthesis; thiamine diphosphate biosynthesis. Functionally, catalyzes the FAD-dependent oxidative deamination of glycine. Is essential for thiamine biosynthesis since the oxidation of glycine catalyzed by ThiO generates the glycine imine intermediate (dehydroglycine) required for the biosynthesis of the thiazole ring of thiamine pyrophosphate. Its function is as follows. Catalyzes the rearrangement of 1-deoxy-D-xylulose 5-phosphate (DXP) to produce the thiazole phosphate moiety of thiamine. Sulfur is provided by the thiocarboxylate moiety of the carrier protein ThiS. In vitro, sulfur can be provided by H(2)S. This Trichormus variabilis (strain ATCC 29413 / PCC 7937) (Anabaena variabilis) protein is Bifunctional protein ThiO/ThiG (thiO/thiG).